The following is a 267-amino-acid chain: Tryptophan synthase alpha chain (267 aa).

Active-site proton acceptor residues include E43 and D54.

Belongs to the TrpA family. As to quaternary structure, tetramer of two alpha and two beta chains.

The catalysed reaction is (1S,2R)-1-C-(indol-3-yl)glycerol 3-phosphate + L-serine = D-glyceraldehyde 3-phosphate + L-tryptophan + H2O. The protein operates within amino-acid biosynthesis; L-tryptophan biosynthesis; L-tryptophan from chorismate: step 5/5. Its function is as follows. The alpha subunit is responsible for the aldol cleavage of indoleglycerol phosphate to indole and glyceraldehyde 3-phosphate. The protein is Tryptophan synthase alpha chain of Bacillus subtilis (strain 168).